A 273-amino-acid polypeptide reads, in one-letter code: Manganese catalase (273 aa).

Mn(2+) is bound at residue Glu35. Positions 57 and 61 each coordinate Ca(2+). The Mn(2+) site is built by Glu66, His69, Glu149, and His182. Residues Asn220, Ser222, and Gly224 each coordinate Ca(2+). Positions Glu254–Glu273 are disordered.

It belongs to the manganese catalase family. Requires Ca(2+) as cofactor. It depends on Mn(2+) as a cofactor.

It carries out the reaction 2 H2O2 = O2 + 2 H2O. In terms of biological role, catalyzes the decomposition of hydrogen peroxide into water and oxygen. The sequence is that of Manganese catalase (ydbD) from Bacillus subtilis (strain 168).